Reading from the N-terminus, the 195-residue chain is ATP-dependent Clp protease proteolytic subunit 2 (195 aa).

Ser95 functions as the Nucleophile in the catalytic mechanism. Residue His120 is part of the active site.

Belongs to the peptidase S14 family. Fourteen ClpP subunits assemble into 2 heptameric rings which stack back to back to give a disk-like structure with a central cavity, resembling the structure of eukaryotic proteasomes.

The protein localises to the cytoplasm. It catalyses the reaction Hydrolysis of proteins to small peptides in the presence of ATP and magnesium. alpha-casein is the usual test substrate. In the absence of ATP, only oligopeptides shorter than five residues are hydrolyzed (such as succinyl-Leu-Tyr-|-NHMec, and Leu-Tyr-Leu-|-Tyr-Trp, in which cleavage of the -Tyr-|-Leu- and -Tyr-|-Trp bonds also occurs).. Cleaves peptides in various proteins in a process that requires ATP hydrolysis. Has a chymotrypsin-like activity. Plays a major role in the degradation of misfolded proteins. The protein is ATP-dependent Clp protease proteolytic subunit 2 of Methylococcus capsulatus (strain ATCC 33009 / NCIMB 11132 / Bath).